A 331-amino-acid chain; its full sequence is HPr kinase/phosphorylase (331 aa).

Active-site residues include histidine 153 and lysine 174. 168–175 (GKSGLGKS) is a binding site for ATP. Serine 175 contacts Mg(2+). Residue aspartate 192 is the Proton acceptor; for phosphorylation activity. Proton donor; for dephosphorylation activity of the active site. The tract at residues 217-226 (MEIRGLGVVD) is important for the catalytic mechanism of both phosphorylation and dephosphorylation. Residue glutamate 218 participates in Mg(2+) binding. Arginine 259 is a catalytic residue. Residues 280-285 (PIFPGK) are important for the catalytic mechanism of dephosphorylation.

It belongs to the HPrK/P family. Homohexamer. Requires Mg(2+) as cofactor.

It catalyses the reaction [HPr protein]-L-serine + ATP = [HPr protein]-O-phospho-L-serine + ADP + H(+). The enzyme catalyses [HPr protein]-O-phospho-L-serine + phosphate + H(+) = [HPr protein]-L-serine + diphosphate. Its function is as follows. Catalyzes the ATP- as well as the pyrophosphate-dependent phosphorylation of a specific serine residue in HPr, a phosphocarrier protein of the phosphoenolpyruvate-dependent sugar phosphotransferase system (PTS). HprK/P also catalyzes the pyrophosphate-producing, inorganic phosphate-dependent dephosphorylation (phosphorolysis) of seryl-phosphorylated HPr (P-Ser-HPr). The chain is HPr kinase/phosphorylase from Pelodictyon phaeoclathratiforme (strain DSM 5477 / BU-1).